A 157-amino-acid polypeptide reads, in one-letter code: Probable intracellular pathogenesis-related protein T1 (157 aa).

Asparagine 79 and asparagine 117 each carry an N-linked (GlcNAc...) asparagine glycan.

The protein belongs to the BetVI family.

The protein is Probable intracellular pathogenesis-related protein T1 (PCKR3) of Catharanthus roseus (Madagascar periwinkle).